Consider the following 64-residue polypeptide: Prokaryotic ubiquitin-like protein Pup (64 aa).

Residues 1 to 11 (MAQEQTKRGGG) show a composition bias toward basic and acidic residues. The interval 1 to 37 (MAQEQTKRGGGGDDEDDFASSTAAGQERREKLAEDTD) is disordered. The ARC ATPase binding stretch occupies residues 21–58 (STAAGQERREKLAEDTDDLLDEIDDVLEENAEDFVRAY). Residues 24–52 (AGQERREKLAEDTDDLLDEIDDVLEENAE) are a coiled coil. Residue Gln-64 is modified to Deamidated glutamine. Gln-64 is covalently cross-linked (Isoglutamyl lysine isopeptide (Gln-Lys) (interchain with K-? in acceptor proteins)).

This sequence belongs to the prokaryotic ubiquitin-like protein family. Strongly interacts with the proteasome-associated ATPase ARC through a hydrophobic interface; the interacting region of Pup lies in its C-terminal half. There is one Pup binding site per ARC hexamer ring. Is modified by deamidation of its C-terminal glutamine to glutamate by the deamidase Dop, a prerequisite to the subsequent pupylation process.

Its pathway is protein degradation; proteasomal Pup-dependent pathway. Functionally, protein modifier that is covalently attached to lysine residues of substrate proteins, thereby targeting them for proteasomal degradation. The tagging system is termed pupylation. The sequence is that of Prokaryotic ubiquitin-like protein Pup from Mycolicibacterium paratuberculosis (strain ATCC BAA-968 / K-10) (Mycobacterium paratuberculosis).